A 338-amino-acid polypeptide reads, in one-letter code: MKCLVCCSYASSRNFGALSCSACKMFFTRATKNYAKFTCKYDKKCFESFTILPKCQFCRFKKCLEIGMRFSEPKQQLFNLNNSVDQDLIILLGNLAVKDGVHYSNFLNFYSLEDPSMDDILADRSRMKLMKRTLEIKTKSHEWTFLGSYYKIAQFLDFDFVKTMSLADRKILFSYNTLRMGSLSRSMRTYLDKRDCLMTPSGDDLFSPAVRGLFDKTPEIINRILCQVVGRLMEIKITYEEYLLLIMIVFCNPSISHELSDSARETLSKYQNMYASFLFRFCQLKNQHKAPTRFNDILSICNVNNKNVEDYCFVHMMFQCMVPEFKFKKLVNDIIIRS.

A DNA-binding region (nuclear receptor) is located at residues 1–75; that stretch reads MKCLVCCSYA…IGMRFSEPKQ (75 aa). 2 consecutive NR C4-type zinc fingers follow at residues 3–23 and 39–63; these read CLVC…CSAC and CKYD…FKKC. Residues 98 to 337 form the NR LBD domain; the sequence is KDGVHYSNFL…KKLVNDIIIR (240 aa).

It belongs to the nuclear hormone receptor family.

Its subcellular location is the nucleus. Functionally, orphan nuclear receptor. In Caenorhabditis elegans, this protein is Nuclear hormone receptor family member nhr-52 (nhr-52).